The primary structure comprises 391 residues: Alkanesulfonate monooxygenase (391 aa).

Belongs to the SsuD family.

The catalysed reaction is an alkanesulfonate + FMNH2 + O2 = an aldehyde + FMN + sulfite + H2O + 2 H(+). Functionally, catalyzes the desulfonation of aliphatic sulfonates. This chain is Alkanesulfonate monooxygenase, found in Rhodopseudomonas palustris (strain TIE-1).